A 125-amino-acid polypeptide reads, in one-letter code: Small ribosomal subunit protein eS6 (125 aa).

Belongs to the eukaryotic ribosomal protein eS6 family. Part of the 30S ribosomal subunit.

In Thermococcus kodakarensis (strain ATCC BAA-918 / JCM 12380 / KOD1) (Pyrococcus kodakaraensis (strain KOD1)), this protein is Small ribosomal subunit protein eS6.